The following is a 542-amino-acid chain: Malolactic enzyme (542 aa).

Residue Tyr-92 is the Proton donor of the active site. Residue Lys-165 is the Proton acceptor of the active site. Lys-165 is a substrate binding site. Residues Glu-236, Asp-237, and Asp-260 each contribute to the Mn(2+) site. Residues 293 to 296 (AGTA), Asn-405, and Asn-450 contribute to the NAD(+) site. Asn-450 is a binding site for substrate.

Belongs to the malic enzymes family. In terms of assembly, homodimer. It depends on Mn(2+) as a cofactor. NAD(+) is required as a cofactor.

It catalyses the reaction (S)-malate + H(+) = (S)-lactate + CO2. Oxamate, fructose-1,6-diphosphate and L-lactate act as non-competitive inhibitors, whereas succinate, citrate and tartrate isomers produce a competitive inhibition. In terms of biological role, involved in the malolactic fermentation (MLF) of wine, which results in a natural decrease in acidity and favorable changes in wine flavors. Catalyzes the decarboxylation of L-malate to L-lactate. The chain is Malolactic enzyme (mleS) from Leuconostoc mesenteroides.